We begin with the raw amino-acid sequence, 105 residues long: Probable tetrachloroethene reductive dehalogenase membrane anchor protein (105 aa).

The next 3 membrane-spanning stretches (helical) occupy residues 3–23 (IYDV…QYGI), 35–55 (IPLQ…LAWG), and 66–86 (AIGM…IITY).

This sequence belongs to the PceB family.

It localises to the cell membrane. May act as a membrane anchor for the tetrachloroethene reductive dehalogenase PceA. The chain is Probable tetrachloroethene reductive dehalogenase membrane anchor protein from Desulfitobacterium hafniense (Desulfitobacterium frappieri).